We begin with the raw amino-acid sequence, 312 residues long: Isethionate sulfite-lyase activating enzyme (312 aa).

Positions 22–309 constitute a Radical SAM core domain; the sequence is HDGPGIRTIV…VDETRGAVTE (288 aa). [4Fe-4S] cluster contacts are provided by cysteine 36, cysteine 40, cysteine 43, cysteine 62, cysteine 65, cysteine 68, cysteine 72, cysteine 92, cysteine 95, cysteine 100, and cysteine 104. Position 42-44 (42-44) interacts with S-adenosyl-L-methionine; the sequence is WCS. 2 consecutive 4Fe-4S ferredoxin-type domains span residues 53-82 and 83-115; these read PQVA…VNED and GTLS…YGEN. S-adenosyl-L-methionine contacts are provided by residues glycine 144, 193 to 195, and histidine 267; that span reads DVK.

It belongs to the organic radical-activating enzymes family. As to quaternary structure, monomer. [4Fe-4S] cluster serves as cofactor.

It carries out the reaction glycyl-[protein] + reduced [flavodoxin] + S-adenosyl-L-methionine = glycin-2-yl radical-[protein] + semiquinone [flavodoxin] + 5'-deoxyadenosine + L-methionine + H(+). The protein operates within organosulfur degradation; alkanesulfonate degradation. In terms of biological role, involved in an anaerobic respiration pathway that converts the sulfonate taurine (2-aminoethanesulfonate) to ammonia, acetate and sulfide. Catalyzes activation of the isethionate sulfite-lyase IslA under anaerobic conditions by generation of an organic free radical on a glycine residue, via a homolytic cleavage of S-adenosyl-L-methionine (SAM). This is Isethionate sulfite-lyase activating enzyme from Bilophila wadsworthia (strain 3_1_6).